A 217-amino-acid polypeptide reads, in one-letter code: Vacuolar protein-sorting-associated protein 37 homolog 1 (217 aa).

Residues 1 to 49 are disordered; it reads MFNFWGSKDQQQGQSRPQEASSQSPWYSPSLVSSPSSSRPQSSGQISAQ. Over residues 8–20 the composition is skewed to polar residues; that stretch reads KDQQQGQSRPQEA. A compositionally biased stretch (low complexity) spans 21 to 47; the sequence is SSQSPWYSPSLVSSPSSSRPQSSGQIS. The VPS37 C-terminal domain occupies 137–217; that stretch reads QEKLNELERQ…IHLAAKTSNI (81 aa).

It belongs to the VPS37 family. In terms of assembly, component of the endosomal sorting required for transport complex I (ESCRT-I), composed of ELC, VPS28 and VPS37. Interacts with ELC.

Its subcellular location is the endosome. Functionally, component of the ESCRT-I complex (endosomal sorting complex required for transport I), a regulator of vesicular trafficking process. Required for the sorting of endocytic ubiquitinated cargos into multivesicular bodies (MVBs). This chain is Vacuolar protein-sorting-associated protein 37 homolog 1 (VPS37-1), found in Arabidopsis thaliana (Mouse-ear cress).